The sequence spans 799 residues: Putative aconitate hydratase, mitochondrial (799 aa).

Residues 1–32 (MVRQLVWQRATASRRLAPKCLSPQQLFARRGL) constitute a mitochondrion transit peptide. Substrate-binding positions include Gln-108 and 201-203 (DSH). Residues Cys-399, Cys-462, and Cys-465 each coordinate [4Fe-4S] cluster. Substrate is bound by residues Arg-489 and Arg-494. Residues 538–564 (KFRPPQGSDLPSAGFADGNPALQPSAG) are disordered. 685-686 (AR) provides a ligand contact to substrate.

The protein belongs to the aconitase/IPM isomerase family.

It localises to the mitochondrion. Functionally, has no detectable activity towards cis-acontiate or cis-homoaconitate. This is Putative aconitate hydratase, mitochondrial (acoB) from Aspergillus fumigatus (strain ATCC MYA-4609 / CBS 101355 / FGSC A1100 / Af293) (Neosartorya fumigata).